The chain runs to 120 residues: Large ribosomal subunit protein uL24 (120 aa).

Belongs to the universal ribosomal protein uL24 family. As to quaternary structure, part of the 50S ribosomal subunit.

In terms of biological role, one of two assembly initiator proteins, it binds directly to the 5'-end of the 23S rRNA, where it nucleates assembly of the 50S subunit. Its function is as follows. Located at the polypeptide exit tunnel on the outside of the subunit. The polypeptide is Large ribosomal subunit protein uL24 (Methanocaldococcus jannaschii (strain ATCC 43067 / DSM 2661 / JAL-1 / JCM 10045 / NBRC 100440) (Methanococcus jannaschii)).